Reading from the N-terminus, the 308-residue chain is Pseudouridine-5'-phosphate glycosidase (308 aa).

Residue glutamate 25 is the Proton donor of the active site. Residues lysine 86 and valine 106 each contribute to the substrate site. Aspartate 142 is a binding site for Mn(2+). Residue 144 to 146 participates in substrate binding; the sequence is SAD. Lysine 163 serves as the catalytic Nucleophile.

It belongs to the pseudouridine-5'-phosphate glycosidase family. In terms of assembly, homotrimer. Mn(2+) is required as a cofactor.

It carries out the reaction D-ribose 5-phosphate + uracil = psi-UMP + H2O. Its function is as follows. Catalyzes the reversible cleavage of pseudouridine 5'-phosphate (PsiMP) to ribose 5-phosphate and uracil. Functions biologically in the cleavage direction, as part of a pseudouridine degradation pathway. The chain is Pseudouridine-5'-phosphate glycosidase from Symbiobacterium thermophilum (strain DSM 24528 / JCM 14929 / IAM 14863 / T).